Consider the following 400-residue polypeptide: Endoglucanase A (400 aa).

Positions 1 to 32 are cleaved as a signal peptide; the sequence is MTKTFKKFSIAGLALLFMATAAFAGWSTKASA. Residue Glu187 is the Proton donor of the active site. Residue Glu328 is the Nucleophile of the active site.

The protein belongs to the glycosyl hydrolase 5 (cellulase A) family.

Its subcellular location is the secreted. It carries out the reaction Endohydrolysis of (1-&gt;4)-beta-D-glucosidic linkages in cellulose, lichenin and cereal beta-D-glucans.. Strongly inhibited by Hg(2+), Ag(+) and Fe(3+). To a lesser extent, is also inhibited by Pb(2+), Mn(2+), Sn(2+) and Cu(2+). By contrast, Ni(2+), Zn(2+), Co(2+), Ba(2+) and NH(4)(+) do not affect enzyme activity, while 10 mM Ca(2+), and Mg(2+) produce a stimulating effect. Is also strongly inhibited by chemicals such as N-bromosuccinimide and dimethyl(2-dihydroxy-5-nitrobenzyl)sulphonium bromide. Is not affected by N-acetylimidazole. Functionally, endoglucanase with high activity on carboxymethylcellulose (CMC) and lichenan, but not active on Avicel. The polypeptide is Endoglucanase A (celA) (Paenibacillus barcinonensis).